A 214-amino-acid polypeptide reads, in one-letter code: Adenylate kinase (214 aa).

ATP is bound at residue Gly10–Thr15. Residues Ser30 to Val59 form an NMP region. Residues Thr31, Arg36, Gln57 to Val59, Gly85 to Arg88, and Gln92 contribute to the AMP site. Residues Gly122–Asp159 form an LID region. ATP-binding positions include Arg123 and Val132–Tyr133. AMP is bound by residues Arg156 and Arg167. Gln200 contacts ATP.

The protein belongs to the adenylate kinase family. In terms of assembly, monomer.

It is found in the cytoplasm. The enzyme catalyses AMP + ATP = 2 ADP. It participates in purine metabolism; AMP biosynthesis via salvage pathway; AMP from ADP: step 1/1. Functionally, catalyzes the reversible transfer of the terminal phosphate group between ATP and AMP. Plays an important role in cellular energy homeostasis and in adenine nucleotide metabolism. The sequence is that of Adenylate kinase from Shewanella loihica (strain ATCC BAA-1088 / PV-4).